Reading from the N-terminus, the 422-residue chain is Probable cysteine desulfurase (422 aa).

N6-(pyridoxal phosphate)lysine is present on Lys-235.

The protein belongs to the class-V pyridoxal-phosphate-dependent aminotransferase family. Csd subfamily. Pyridoxal 5'-phosphate serves as cofactor.

The catalysed reaction is (sulfur carrier)-H + L-cysteine = (sulfur carrier)-SH + L-alanine. Functionally, catalyzes the removal of elemental sulfur and selenium atoms from L-cysteine, L-cystine, L-selenocysteine, and L-selenocystine to produce L-alanine. This Borreliella burgdorferi (strain ATCC 35210 / DSM 4680 / CIP 102532 / B31) (Borrelia burgdorferi) protein is Probable cysteine desulfurase (csd).